A 156-amino-acid chain; its full sequence is Small ribosomal subunit protein uS7 (156 aa).

The protein belongs to the universal ribosomal protein uS7 family. In terms of assembly, part of the 30S ribosomal subunit. Contacts proteins S9 and S11.

In terms of biological role, one of the primary rRNA binding proteins, it binds directly to 16S rRNA where it nucleates assembly of the head domain of the 30S subunit. Is located at the subunit interface close to the decoding center, probably blocks exit of the E-site tRNA. This is Small ribosomal subunit protein uS7 from Buchnera aphidicola subsp. Acyrthosiphon pisum (strain Tuc7).